A 242-amino-acid polypeptide reads, in one-letter code: 7-cyano-7-deazaguanine synthase (242 aa).

13–23 (FSGGQDSSVCL) serves as a coordination point for ATP. Residues Cys201, Cys216, Cys219, and Cys222 each coordinate Zn(2+).

Belongs to the QueC family. The cofactor is Zn(2+).

The enzyme catalyses 7-carboxy-7-deazaguanine + NH4(+) + ATP = 7-cyano-7-deazaguanine + ADP + phosphate + H2O + H(+). Its pathway is purine metabolism; 7-cyano-7-deazaguanine biosynthesis. Its function is as follows. Catalyzes the ATP-dependent conversion of 7-carboxy-7-deazaguanine (CDG) to 7-cyano-7-deazaguanine (preQ(0)). This chain is 7-cyano-7-deazaguanine synthase, found in Caulobacter vibrioides (strain ATCC 19089 / CIP 103742 / CB 15) (Caulobacter crescentus).